A 208-amino-acid polypeptide reads, in one-letter code: Uracil phosphoribosyltransferase (208 aa).

5-phospho-alpha-D-ribose 1-diphosphate-binding positions include arginine 78, arginine 103, and 130 to 138 (DPMFATGGT). Uracil-binding positions include isoleucine 193 and 198–200 (GDA). Aspartate 199 contributes to the 5-phospho-alpha-D-ribose 1-diphosphate binding site.

The protein belongs to the UPRTase family. The cofactor is Mg(2+).

It carries out the reaction UMP + diphosphate = 5-phospho-alpha-D-ribose 1-diphosphate + uracil. The protein operates within pyrimidine metabolism; UMP biosynthesis via salvage pathway; UMP from uracil: step 1/1. Its activity is regulated as follows. Allosterically activated by GTP. Catalyzes the conversion of uracil and 5-phospho-alpha-D-ribose 1-diphosphate (PRPP) to UMP and diphosphate. This is Uracil phosphoribosyltransferase from Campylobacter concisus (strain 13826).